The following is a 540-amino-acid chain: Putative laccase-11 (540 aa).

Plastocyanin-like domains lie at 1–114 (MATV…PPRG), 124–279 (REVP…YYGA), and 389–523 (NFPA…NDGP). The Cu cation site is built by histidine 48, histidine 50, histidine 93, and histidine 95. 7 residues coordinate Cu cation: histidine 440, histidine 443, histidine 445, histidine 502, cysteine 503, histidine 504, and histidine 508.

This sequence belongs to the multicopper oxidase family. Cu cation is required as a cofactor.

The protein resides in the secreted. It is found in the extracellular space. It localises to the apoplast. The catalysed reaction is 4 hydroquinone + O2 = 4 benzosemiquinone + 2 H2O. Lignin degradation and detoxification of lignin-derived products. The polypeptide is Putative laccase-11 (LAC11) (Oryza sativa subsp. japonica (Rice)).